We begin with the raw amino-acid sequence, 262 residues long: 5'-nucleotidase SurE (262 aa).

A divalent metal cation is bound by residues D11, D12, S43, and N101. Over residues S220 to P229 the composition is skewed to basic and acidic residues. The interval S220–Q246 is disordered. Polar residues predominate over residues D231 to P244.

Belongs to the SurE nucleotidase family. A divalent metal cation is required as a cofactor.

It localises to the cytoplasm. It carries out the reaction a ribonucleoside 5'-phosphate + H2O = a ribonucleoside + phosphate. Nucleotidase that shows phosphatase activity on nucleoside 5'-monophosphates. The protein is 5'-nucleotidase SurE of Prochlorococcus marinus (strain SARG / CCMP1375 / SS120).